Here is a 168-residue protein sequence, read N- to C-terminus: Small ribosomal subunit protein bS6 (168 aa).

The disordered stretch occupies residues 103–168 (RQAIAEEKEK…AAADKSDDNA (66 aa)). A compositionally biased stretch (basic and acidic residues) spans 106–115 (IAEEKEKKAE). Over residues 116–125 (GQAAADAAPA) the composition is skewed to low complexity.

This sequence belongs to the bacterial ribosomal protein bS6 family.

Functionally, binds together with bS18 to 16S ribosomal RNA. This Desulfosudis oleivorans (strain DSM 6200 / JCM 39069 / Hxd3) (Desulfococcus oleovorans) protein is Small ribosomal subunit protein bS6.